The following is a 208-amino-acid chain: Intraflagellar transport protein 43 homolog (208 aa).

M1 carries the post-translational modification N-acetylmethionine. Positions 18 to 65 are disordered; the sequence is SRAKMGRRAQQESAQAENHLNGKNSSLTLTGETSSAKLPRCRQGGWAG. Over residues 28–53 the composition is skewed to polar residues; the sequence is QESAQAENHLNGKNSSLTLTGETSSA. S78 is modified (phosphoserine).

The protein belongs to the IFT43 family. In terms of assembly, component of the IFT complex A (IFT-A) complex. IFT-A complex is divided into a core subcomplex composed of IFT122:IFT140:WDR19 which is associated with TULP3 and a peripheral subcomplex composed of IFT43:WDR35:TTC21B. Interacts directy with IFT122, WDR35 and TTC21B. In terms of tissue distribution, expressed in the retina, predominantly in the photoreceptor outer segment.

The protein resides in the cytoplasm. Its subcellular location is the cytoskeleton. It localises to the cell projection. It is found in the cilium. As a component of IFT complex A (IFT-A), a complex required for retrograde ciliary transport and entry into cilia of G protein-coupled receptors (GPCRs), it is involved in ciliogenesis. Involved in retrograde ciliary transport along microtubules from the ciliary tip to the base. This chain is Intraflagellar transport protein 43 homolog, found in Homo sapiens (Human).